The chain runs to 491 residues: Iota-carrageenase (491 aa).

A signal peptide spans 1-23 (MRLYFRKLWLTNLFLGGALASSA). Cystine bridges form between C269–C298, C336–C360, C408–C476, and C412–C484.

It belongs to the glycosyl hydrolase 82 family.

The protein localises to the secreted. The catalysed reaction is Endohydrolysis of 1,4-beta-D-linkages between D-galactose 4-sulfate and 3,6-anhydro-D-galactose-2-sulfate in iota-carrageenans.. In terms of biological role, hydrolyzes iota-carrageenans, sulfated 1,3-alpha-1,4-beta galactans from red algal cell walls, with an inversion of anomeric configuration. Also active against hybrid iota-/nu-carrageenan, not active against kappa- or lambda-carrageenans. The polypeptide is Iota-carrageenase (Alteromonas macleodii (Pseudoalteromonas macleodii)).